Consider the following 489-residue polypeptide: Virion host shutoff protein (489 aa).

Disordered stretches follow at residues 110–135 (EEAS…AFSN), 142–161 (SLAS…PSAA), 285–316 (RSQT…GGTE), and 333–363 (YEDD…ILTP). Polar residues predominate over residues 124 to 134 (ITDSRPSSAFS).

The protein belongs to the herpesviridae VHS protein family. In terms of assembly, interacts with human EIF4H, EIF4A1 and EIF4A2; interaction with eIF4AI and EIF4A2 presumably allows Vhs protein to associate with the eIF4F cap-binding complex.

The protein resides in the virion. Its function is as follows. Minor structural protein that acts as an endoribonuclease during lytic infection. Degrades host mRNAs in the cytoplasm by cutting them at preferred sites, including some in regions of translation initiation. Together with inhibition of host splicing by ICP27, contributes to an overall decrease in host protein synthesis. Also, after the onset of viral transcription, accelerates the turnover of viral mRNA, thereby facilitating the sequential expression of different classes of viral genes. Binds translation initiation factors eIF4H, eIF4AI, and eIF4AII, thereby may interact directly with the translation initiation complex and thus digest specifically mRNAs. Also impedes antigen presentation by major histocompatibility complex class I and class II molecules, inhibits secretion of cytokines that would otherwise recruit lymphocytes and neutrophils cells to the site of infection and blocks the activation of dendritic cells. Impedes the alpha/beta interferon-mediated response to infection by evading the cGAS/ STING-mediated DNA-sensing pathway and degrading CGAS via its RNase activity. In Human herpesvirus 1 (strain KOS) (HHV-1), this protein is Virion host shutoff protein (UL41).